A 325-amino-acid chain; its full sequence is Heat-inducible transcription repressor HrcA (325 aa).

This sequence belongs to the HrcA family.

Its function is as follows. Negative regulator of class I heat shock genes (grpE-dnaK-dnaJ and groELS operons). Prevents heat-shock induction of these operons. This Staphylococcus aureus (strain USA300) protein is Heat-inducible transcription repressor HrcA.